The primary structure comprises 425 residues: MKPVKKKKTEEPELEPLCCCEYIDRNGEKNHVAACLCDCQDLDEGCDRWLTCQSLRPETCERITDTISDRLRIPWLRGAKKVNISIVPPLVLLPVFLHVASWHFLLGVVVLTSLPMLALWYYYLTHRRKEQTLFFLSLGLFSLGYMYYVFLREVVPQGRVGPTQLALLTCGLLLILLALYRAKKNPGYLSNDKSPSNSQIECPVKKGQEKTKGFPGTDASGSLNNRTLKDDVRGSSRVGLDSPAKVKEDWCAKCQLVRPARAWHCRICGICVRRMDHHCVWINSCVGESNHQAFILALSIFLLTSVYGISLTLNTICRDRSLFTALFYCPGVYANYSSALSFTCVWYSVIITAGMAYIFLIQLINISYNVTEREVQQALRQKTGRRLLCGLIVDTGQYNRGFLRNWLQFSTLGTHTVHTPAEDIV.

The Cytoplasmic segment spans residues 1–81 (MKPVKKKKTE…RIPWLRGAKK (81 aa)). The chain crosses the membrane as a helical span at residues 82-99 (VNISIVPPLVLLPVFLHV). Topologically, residues 100–102 (ASW) are lumenal. Residues 103–125 (HFLLGVVVLTSLPMLALWYYYLT) traverse the membrane as a helical segment. Residues 126-130 (HRRKE) are Cytoplasmic-facing. A helical membrane pass occupies residues 131–151 (QTLFFLSLGLFSLGYMYYVFL). Residues 152–159 (REVVPQGR) are Lumenal-facing. Residues 160 to 180 (VGPTQLALLTCGLLLILLALY) traverse the membrane as a helical segment. Topologically, residues 181 to 292 (RAKKNPGYLS…NSCVGESNHQ (112 aa)) are cytoplasmic. Positions 249–299 (DWCAKCQLVRPARAWHCRICGICVRRMDHHCVWINSCVGESNHQAFILALS) constitute a DHHC domain. Residue cysteine 279 is the S-palmitoyl cysteine intermediate of the active site. Residues 293–313 (AFILALSIFLLTSVYGISLTL) form a helical membrane-spanning segment. The Lumenal segment spans residues 314–343 (NTICRDRSLFTALFYCPGVYANYSSALSFT). Residues 344–364 (CVWYSVIITAGMAYIFLIQLI) form a helical membrane-spanning segment. Residues 365-425 (NISYNVTERE…TVHTPAEDIV (61 aa)) lie on the Cytoplasmic side of the membrane. An interaction with NOS1 region spans residues 422 to 425 (EDIV).

Belongs to the DHHC palmitoyltransferase family. Interacts with NOS1. In terms of tissue distribution, expressed in the brain.

The protein resides in the golgi apparatus membrane. The protein localises to the golgi apparatus. It localises to the trans-Golgi network membrane. It carries out the reaction L-cysteinyl-[protein] + hexadecanoyl-CoA = S-hexadecanoyl-L-cysteinyl-[protein] + CoA. In terms of biological role, palmitoyltransferase that could catalyze the addition of palmitate onto various protein substrates and be involved in a variety of cellular processes. Palmitoyltransferase that mediates palmitoylation of KCNMA1, regulating localization of KCNMA1 to the plasma membrane. May be involved in NOS1 regulation and targeting to the synaptic membrane. This Mus musculus (Mouse) protein is Palmitoyltransferase ZDHHC23.